A 279-amino-acid polypeptide reads, in one-letter code: Succinate dehydrogenase [ubiquinone] iron-sulfur subunit 1, mitochondrial (279 aa).

Residues Met-1 to Trp-28 constitute a mitochondrion transit peptide. One can recognise a 2Fe-2S ferredoxin-type domain in the interval Phe-52–Met-141. [2Fe-2S] cluster is bound by residues Cys-102, Cys-107, and Cys-122. One can recognise a 4Fe-4S ferredoxin-type domain in the interval Asp-184–Tyr-214. Positions 194, 197, and 200 each coordinate [4Fe-4S] cluster. Cys-204 contributes to the [3Fe-4S] cluster binding site. Trp-209 is a binding site for a ubiquinone. 2 residues coordinate [3Fe-4S] cluster: Cys-251 and Cys-257. [4Fe-4S] cluster is bound at residue Cys-261.

It belongs to the succinate dehydrogenase/fumarate reductase iron-sulfur protein family. Component of complex II composed of eight subunits in plants: four classical SDH subunits SDH1, SDH2, SDH3 and SDH4 (a flavoprotein (FP), an iron-sulfur protein (IP), and a cytochrome b composed of a large and a small subunit.), as well as four subunits unknown in mitochondria from bacteria and heterotrophic eukaryotes. [2Fe-2S] cluster is required as a cofactor. [3Fe-4S] cluster serves as cofactor. It depends on [4Fe-4S] cluster as a cofactor. As to expression, ubiquitous. Preferentially expressed in flowers and inflorescences.

Its subcellular location is the mitochondrion inner membrane. It carries out the reaction a quinone + succinate = fumarate + a quinol. The protein operates within carbohydrate metabolism; tricarboxylic acid cycle; fumarate from succinate (eukaryal route): step 1/1. Iron-sulfur protein (IP) subunit of succinate dehydrogenase (SDH) that is involved in complex II of the mitochondrial electron transport chain and is responsible for transferring electrons from succinate to ubiquinone (coenzyme Q). This chain is Succinate dehydrogenase [ubiquinone] iron-sulfur subunit 1, mitochondrial (SDH2-1), found in Arabidopsis thaliana (Mouse-ear cress).